Here is a 313-residue protein sequence, read N- to C-terminus: Olfactory receptor 6E1 (313 aa).

N3 is a glycosylation site (N-linked (GlcNAc...) asparagine). 7 helical membrane-spanning segments follow: residues 25-45 (IFLG…LIIF), 64-84 (FAML…TNII), 96-116 (FLQA…LAVM), 142-162 (LVFC…SIVF), 192-212 (LVEF…LAVT), 238-258 (TCSS…FMYV), and 271-291 (KVVA…IYTL). An intrachain disulfide couples C95 to C177.

The protein belongs to the G-protein coupled receptor 1 family.

It is found in the cell membrane. Its function is as follows. Odorant receptor. Activated by (-)-citronellal and to a lesser extent by (+)-citronellal. Not activated by carvone or limonene. The chain is Olfactory receptor 6E1 from Mus musculus (Mouse).